The sequence spans 85 residues: Arminin 524 (85 aa).

A signal peptide spans 1 to 18 (MKAVFAILFLAFIALTYA). The propeptide occupies 19–57 (KSYDEVKEEIKNEVEREIFEDLEEESDELDNDVEEFNDA). Position 82 is an alanine amide (A82).

This sequence belongs to the arminin family. As to expression, expressed in entodermal epithelium along the body column.

The protein resides in the secreted. Its subcellular location is the target cell membrane. Functionally, antimicrobial peptide with a broad-spectrum antimicrobial activity. Keeps its antibacterial activity under a wide range of salt concentrations that mimic physiological conditions of human blood, which is surprising, since Hydra is an obligate freshwater animal with nearly no salt tolerance. Does not affect red blood cells. This chain is Arminin 524, found in Hydra oligactis (Brown hydra).